Here is a 1166-residue protein sequence, read N- to C-terminus: Pesticidal crystal protein Cry1Ga (1166 aa).

This sequence belongs to the delta endotoxin family.

Its function is as follows. Promotes colloidosmotic lysis by binding to the midgut epithelial cells of insects. This is Pesticidal crystal protein Cry1Ga (cry1Ga) from Bacillus thuringiensis.